An 817-amino-acid chain; its full sequence is MKRLRNLSSSDSSDNESPSTSFSSCFQHKGKGKCTADDGKKSAEVFRKDLISAMKIPDSQHVNPEEYYQFADTWKQEWEKGVQVPSNPENIPQPSLRVIAEKAKEVLFTRPRKYIHCSSQEPAEPGYINILELAESMCRYDLDDLDLYWLGECNLELADMGCAPVDESTMEKTLEVLERQCHENMNHAIETEEGLGIEYDEDVICDVCRSPDSEEGNDMVFCDRCNICVHQACYGILKVPEGSWLCRTCVLGLHPQCILCPKTGGAMKATRTGTKWAHVSCALWIPEVSIACPERMEPITKVSHIPPSRWALVCSLCKLKTGACIQCSVKSCITAFHVTCAFEHSLEMKTILDEGDEVKFKSYCLKHSKNKHGLISEQEEPHKTHSDNRPTESERTSLRAQKLKELEEDFYTLVKVEDVAAELGLPMLTVDFIYSFWKLKRKSNFNKPLLTPKEDEQNGLVQPKEDSIHTRMRMFMHLRQDLERVRNLCYMVNRREKLKLSHSKMHEEIFNLQVQLVNQEVAAGQPLSNALENTLFYPPPRITLKLKMPKPRTRDCRISSVKAGTMSSPDNQNSSATYHGMGGEVHRQSSEHTKLYSTYASEQRNNGLLGGITRFHKEFQGTGCKPSSRFRSSGKPMSLQAVIHGQSSNGSGKVQHEHVSLARANGVLSSGDRTQRDSSSQTSPGQNSEIICHIAGQSTFRKANMEHFSRSFKEATNNLVRTTEDLRSSEKPQRRQSVKERLWSKQPADTQTSGTPYQDNDGYCPDLELSDSEAESDENKDHMLLRRNSRESPNRDSCRNSRIRGKRKMTSHSSVQR.

The interval 1–38 is disordered; sequence MKRLRNLSSSDSSDNESPSTSFSSCFQHKGKGKCTADD. Residues 8–24 are compositionally biased toward low complexity; it reads SSSDSSDNESPSTSFSS. Residues 202–252 form a PHD-type 1 zinc finger; sequence DVICDVCRSPDSEEGNDMVFCDRCNICVHQACYGILKVPEGSWLCRTCVLG. The segment at 254–288 adopts a C2HC pre-PHD-type zinc-finger fold; sequence HPQCILCPKTGGAMKATRTGTKWAHVSCALWIPEV. A PHD-type 2 zinc finger spans residues 312 to 368; the sequence is LVCSLCKLKTGACIQCSVKSCITAFHVTCAFEHSLEMKTILDEGDEVKFKSYCLKHS. Disordered stretches follow at residues 375–396, 665–689, and 719–817; these read ISEQEEPHKTHSDNRPTESERT, NGVLSSGDRTQRDSSSQTSPGQNSE, and LVRT…SVQR. Residues 379–396 are compositionally biased toward basic and acidic residues; it reads EEPHKTHSDNRPTESERT. Polar residues predominate over residues 667–689; the sequence is VLSSGDRTQRDSSSQTSPGQNSE. Over residues 722 to 743 the composition is skewed to basic and acidic residues; it reads TTEDLRSSEKPQRRQSVKERLW. Residues 747–758 show a composition bias toward polar residues; it reads PADTQTSGTPYQ. Positions 777–799 are enriched in basic and acidic residues; that stretch reads DENKDHMLLRRNSRESPNRDSCR. Positions 801 to 810 are enriched in basic residues; sequence SRIRGKRKMT.

Belongs to the JADE family. Component of the HBO1 complex.

Functionally, scaffold subunit of some HBO1 complexes, which have a histone H4 acetyltransferase activity. The sequence is that of Protein Jade-3 (jade3) from Xenopus tropicalis (Western clawed frog).